We begin with the raw amino-acid sequence, 191 residues long: Large ribosomal subunit protein bL9 (191 aa).

The disordered stretch occupies residues 149 to 191; the sequence is EEAERQSKGESLTSADAIYGVDEDALRPEDFFDPEADGNEDDE. Residues 179 to 191 show a composition bias toward acidic residues; that stretch reads FFDPEADGNEDDE.

Belongs to the bacterial ribosomal protein bL9 family.

Functionally, binds to the 23S rRNA. This chain is Large ribosomal subunit protein bL9 (rplI), found in Agrobacterium fabrum (strain C58 / ATCC 33970) (Agrobacterium tumefaciens (strain C58)).